The chain runs to 669 residues: DNA ligase (669 aa).

NAD(+)-binding positions include 34 to 38, 83 to 84, and glutamate 114; these read DAEYD and SL. The N6-AMP-lysine intermediate role is filled by lysine 116. Residues arginine 137, glutamate 171, lysine 287, and lysine 311 each contribute to the NAD(+) site. Positions 405, 408, 423, and 428 each coordinate Zn(2+). The BRCT domain maps to 591-669; sequence NVESYFAGKT…EERFLQELNK (79 aa).

Belongs to the NAD-dependent DNA ligase family. LigA subfamily. The cofactor is Mg(2+). Mn(2+) is required as a cofactor.

The catalysed reaction is NAD(+) + (deoxyribonucleotide)n-3'-hydroxyl + 5'-phospho-(deoxyribonucleotide)m = (deoxyribonucleotide)n+m + AMP + beta-nicotinamide D-nucleotide.. DNA ligase that catalyzes the formation of phosphodiester linkages between 5'-phosphoryl and 3'-hydroxyl groups in double-stranded DNA using NAD as a coenzyme and as the energy source for the reaction. It is essential for DNA replication and repair of damaged DNA. This chain is DNA ligase, found in Bacillus cereus (strain ZK / E33L).